Consider the following 403-residue polypeptide: Na(+)/H(+) antiporter NhaA (403 aa).

Helical transmembrane passes span 23–43 (AFFLLLASLAGFVLANSPWAA), 66–86 (VAAWVSDGLMTLFFLVVILEI), 101–121 (VALPLIGAVGGMVVPALTYLL), 132–152 (GWAIPVATDAAFTLPIILALG), 161–181 (AWLMALAIFDDVLGIVVIALF), 184–204 (GSMYWPALLAVVLVTAALIGA), 219–239 (GILLWTALLDSGLHPTLAGVI), 257–277 (WVSSAVTPLVTWIVLPLFGFM), 297–317 (LGIMLGLMLGKPVGVFGATLL), 333–353 (GMLFGLSLLCGIGFTISLFVA), and 363–383 (IAPAKMGIFAGSALSALTGWF).

It belongs to the NhaA Na(+)/H(+) (TC 2.A.33) antiporter family.

It is found in the cell inner membrane. The enzyme catalyses Na(+)(in) + 2 H(+)(out) = Na(+)(out) + 2 H(+)(in). Its function is as follows. Na(+)/H(+) antiporter that extrudes sodium in exchange for external protons. The chain is Na(+)/H(+) antiporter NhaA from Gluconobacter oxydans (strain 621H) (Gluconobacter suboxydans).